A 207-amino-acid chain; its full sequence is Protein LURP1 (207 aa).

The protein belongs to the LOR family. In terms of tissue distribution, limited to discrete pathogen infection sites in leaves.

Involved in basal defense against virulent oomycetes. Might be related to the phospholipid scramblase and tubby-like superfamily of membrane tethered transcription factors. This is Protein LURP1 (LURP1) from Arabidopsis thaliana (Mouse-ear cress).